A 407-amino-acid polypeptide reads, in one-letter code: Peptidase T (407 aa).

H82 is a Zn(2+) binding site. D84 is an active-site residue. D143 contributes to the Zn(2+) binding site. The Proton acceptor role is filled by E177. Positions 178, 200, and 382 each coordinate Zn(2+).

The protein belongs to the peptidase M20B family. Requires Zn(2+) as cofactor.

The protein localises to the cytoplasm. It carries out the reaction Release of the N-terminal residue from a tripeptide.. Its function is as follows. Cleaves the N-terminal amino acid of tripeptides. The protein is Peptidase T of Streptococcus thermophilus (strain ATCC BAA-491 / LMD-9).